We begin with the raw amino-acid sequence, 72 residues long: Rubredoxin in uptake hydrogenase operon (72 aa).

The region spanning 19 to 70 (DAVLECKICWHRYDPAVGDEVWQILAGTPFAALPAHWRCPQCDGDREQFMVV) is the Rubredoxin-like domain. Cys-24, Cys-27, Cys-57, and Cys-60 together coordinate Fe cation.

Belongs to the rubredoxin family. Requires Fe(3+) as cofactor.

Functionally, could be an electron transport intermediate in hydrogen oxidation. The protein is Rubredoxin in uptake hydrogenase operon (hupR) of Azotobacter chroococcum mcd 1.